The primary structure comprises 27 residues: Metallothionein-like protein CAP5 (27 aa).

Over residues 1–18 (MAPCSCKSCGTSCAGSCT) the composition is skewed to low complexity. The interval 1-27 (MAPCSCKSCGTSCAGSCTSCSCGSCSH) is disordered. Positions 4, 6, 9, 13, 20, 22, and 25 each coordinate Cu(+).

It belongs to the metallothionein superfamily. Type 8 family.

The chain is Metallothionein-like protein CAP5 (CAP5) from Colletotrichum gloeosporioides (Anthracnose fungus).